A 246-amino-acid chain; its full sequence is uncharacterized protein (246 aa).

Residues 7 to 29 traverse the membrane as a helical segment; that stretch reads GRGALASTGGCVVLAVAALMFVF.

Its subcellular location is the membrane. This is an uncharacterized protein from Treponema pallidum (strain Nichols).